A 256-amino-acid chain; its full sequence is Pyrroloquinoline-quinone synthase (256 aa).

Belongs to the PqqC family.

The enzyme catalyses 6-(2-amino-2-carboxyethyl)-7,8-dioxo-1,2,3,4,7,8-hexahydroquinoline-2,4-dicarboxylate + 3 O2 = pyrroloquinoline quinone + 2 H2O2 + 2 H2O + H(+). It participates in cofactor biosynthesis; pyrroloquinoline quinone biosynthesis. In terms of biological role, ring cyclization and eight-electron oxidation of 3a-(2-amino-2-carboxyethyl)-4,5-dioxo-4,5,6,7,8,9-hexahydroquinoline-7,9-dicarboxylic-acid to PQQ. In Rhizobium meliloti (strain 1021) (Ensifer meliloti), this protein is Pyrroloquinoline-quinone synthase.